The primary structure comprises 68 residues: Conotoxin TsMMSK-021 (68 aa).

Positions 1–20 (MMSKLGVLLTICLLLFPLTA) are cleaved as a signal peptide. The propeptide occupies 21-50 (VPLDGDQHADRPADRMQDISSEQHPLFDPV). Cystine bridges form between cysteine 53-cysteine 66, cysteine 54-cysteine 62, and cysteine 58-cysteine 65. 4-hydroxyproline is present on proline 64.

It belongs to the conotoxin M superfamily. As to expression, expressed by the venom duct.

The protein resides in the secreted. The polypeptide is Conotoxin TsMMSK-021 (Conus tessulatus (Tessellate cone)).